The sequence spans 150 residues: 1,4-dihydroxy-2-naphthoyl-CoA hydrolase (150 aa).

Residue D19 is part of the active site.

Belongs to the 4-hydroxybenzoyl-CoA thioesterase family. DHNA-CoA hydrolase subfamily.

The enzyme catalyses 1,4-dihydroxy-2-naphthoyl-CoA + H2O = 1,4-dihydroxy-2-naphthoate + CoA + H(+). The protein operates within cofactor biosynthesis; phylloquinone biosynthesis. Its pathway is quinol/quinone metabolism; 1,4-dihydroxy-2-naphthoate biosynthesis; 1,4-dihydroxy-2-naphthoate from chorismate: step 7/7. Its function is as follows. Catalyzes the hydrolysis of 1,4-dihydroxy-2-naphthoyl-CoA (DHNA-CoA) to 1,4-dihydroxy-2-naphthoate (DHNA), a reaction involved in phylloquinone (vitamin K1) biosynthesis. This Prochlorococcus marinus (strain MIT 9312) protein is 1,4-dihydroxy-2-naphthoyl-CoA hydrolase.